The chain runs to 768 residues: Vitamin B12-dependent ribonucleoside-diphosphate reductase (768 aa).

Residues 3-97 (KEVVKRDGTV…LYREKRRAIR (95 aa)) enclose the ATP-cone domain. Substrate contacts are provided by residues serine 234, 249 to 250 (AC), glycine 278, 432 to 436 (NPCGE), and 579 to 583 (PTGTI). Cysteine 250 and cysteine 445 are joined by a disulfide. Catalysis depends on asparagine 432, which acts as the Proton acceptor. The Cysteine radical intermediate role is filled by cysteine 434. Residue glutamate 436 is the Proton acceptor of the active site.

This sequence belongs to the ribonucleoside diphosphate reductase class-2 family. Monomer. Requires adenosylcob(III)alamin as cofactor.

It catalyses the reaction a 2'-deoxyribonucleoside 5'-diphosphate + [thioredoxin]-disulfide + H2O = a ribonucleoside 5'-diphosphate + [thioredoxin]-dithiol. Its function is as follows. Provides the precursors necessary for DNA synthesis. Catalyzes the biosynthesis of deoxyribonucleotides from the corresponding ribonucleotides. This chain is Vitamin B12-dependent ribonucleoside-diphosphate reductase, found in Thermoplasma acidophilum (strain ATCC 25905 / DSM 1728 / JCM 9062 / NBRC 15155 / AMRC-C165).